Consider the following 383-residue polypeptide: Deoxyguanosinetriphosphate triphosphohydrolase-like protein (383 aa).

One can recognise an HD domain in the interval 62 to 198 (RLTHSLEVST…ASLADDISYI (137 aa)).

This sequence belongs to the dGTPase family. Type 2 subfamily.

This Rickettsia prowazekii (strain Madrid E) protein is Deoxyguanosinetriphosphate triphosphohydrolase-like protein.